The chain runs to 153 residues: NAD(P)H-quinone oxidoreductase subunit N (153 aa).

It belongs to the complex I NdhN subunit family. NDH-1 can be composed of about 15 different subunits; different subcomplexes with different compositions have been identified which probably have different functions.

The protein localises to the cellular thylakoid membrane. It catalyses the reaction a plastoquinone + NADH + (n+1) H(+)(in) = a plastoquinol + NAD(+) + n H(+)(out). It carries out the reaction a plastoquinone + NADPH + (n+1) H(+)(in) = a plastoquinol + NADP(+) + n H(+)(out). NDH-1 shuttles electrons from an unknown electron donor, via FMN and iron-sulfur (Fe-S) centers, to quinones in the respiratory and/or the photosynthetic chain. The immediate electron acceptor for the enzyme in this species is believed to be plastoquinone. Couples the redox reaction to proton translocation, and thus conserves the redox energy in a proton gradient. Cyanobacterial NDH-1 also plays a role in inorganic carbon-concentration. The protein is NAD(P)H-quinone oxidoreductase subunit N of Synechococcus sp. (strain CC9311).